The following is a 472-amino-acid chain: Glutamate--tRNA ligase (472 aa).

The 'HIGH' region signature appears at 9-19; it reads PSPTGYLHVGG. Zn(2+) is bound by residues C98, C100, C125, and H127. The 'KMSKS' region motif lies at 237–241; sequence KLSKR. K240 is a binding site for ATP.

It belongs to the class-I aminoacyl-tRNA synthetase family. Glutamate--tRNA ligase type 1 subfamily. Monomer. The cofactor is Zn(2+).

It is found in the cytoplasm. The enzyme catalyses tRNA(Glu) + L-glutamate + ATP = L-glutamyl-tRNA(Glu) + AMP + diphosphate. Catalyzes the attachment of glutamate to tRNA(Glu) in a two-step reaction: glutamate is first activated by ATP to form Glu-AMP and then transferred to the acceptor end of tRNA(Glu). This chain is Glutamate--tRNA ligase, found in Klebsiella pneumoniae subsp. pneumoniae (strain ATCC 700721 / MGH 78578).